Here is a 37-residue protein sequence, read N- to C-terminus: MVETLLSGIILGLIPITICGLFFTAYLQYMRSGNSFY.

A helical membrane pass occupies residues 5–25 (LLSGIILGLIPITICGLFFTA).

This sequence belongs to the PetG family. As to quaternary structure, the 4 large subunits of the cytochrome b6-f complex are cytochrome b6, subunit IV (17 kDa polypeptide, PetD), cytochrome f and the Rieske protein, while the 4 small subunits are PetG, PetL, PetM and PetN. The complex functions as a dimer.

It localises to the plastid. Its subcellular location is the chloroplast thylakoid membrane. In terms of biological role, component of the cytochrome b6-f complex, which mediates electron transfer between photosystem II (PSII) and photosystem I (PSI), cyclic electron flow around PSI, and state transitions. PetG is required for either the stability or assembly of the cytochrome b6-f complex. In Euglena gracilis, this protein is Cytochrome b6-f complex subunit 5.